We begin with the raw amino-acid sequence, 861 residues long: Leucine--tRNA ligase (861 aa).

The 'HIGH' region motif lies at 42–52; sequence PYPSGKLHMGH. Residues 620–624 carry the 'KMSKS' region motif; the sequence is KMSKS. Lys-623 serves as a coordination point for ATP.

This sequence belongs to the class-I aminoacyl-tRNA synthetase family.

It localises to the cytoplasm. It catalyses the reaction tRNA(Leu) + L-leucine + ATP = L-leucyl-tRNA(Leu) + AMP + diphosphate. The polypeptide is Leucine--tRNA ligase (Marinobacter nauticus (strain ATCC 700491 / DSM 11845 / VT8) (Marinobacter aquaeolei)).